A 195-amino-acid polypeptide reads, in one-letter code: Heavy metal-associated isoprenylated plant protein 18 (195 aa).

Disordered stretches follow at residues 36-76 (DVVQ…KPET) and 145-172 (EKEKKDDEPITKDEENEIDRGVYMNPSS). Composition is skewed to basic and acidic residues over residues 47–76 (TVTKKNEEGDIVDKKDETPEVEEKIDKPET) and 145–157 (EKEKKDDEPITKD). The HMA domain maps to 78 to 149 (TRKLEIHIAF…RIVKMEKEKK (72 aa)). At cysteine 192 the chain carries Cysteine methyl ester. A lipid anchor (S-farnesyl cysteine) is attached at cysteine 192. Positions 193-195 (SIS) are cleaved as a propeptide — removed in mature form.

Belongs to the HIPP family.

Its function is as follows. Probable heavy-metal-binding protein. Required for female gametophyte development and function. This chain is Heavy metal-associated isoprenylated plant protein 18, found in Arabidopsis thaliana (Mouse-ear cress).